The chain runs to 116 residues: Ferredoxin-like protein in nif region (116 aa).

The 4Fe-4S ferredoxin-type domain occupies 2–29 (AYTITSQCISCKLCSSVCPTGAIKVAED). Residues Cys-9, Cys-12, Cys-15, and Cys-19 each coordinate iron-sulfur cluster.

This chain is Ferredoxin-like protein in nif region (fdxN), found in Trichormus azollae (Anabaena azollae).